Here is a 1008-residue protein sequence, read N- to C-terminus: Probable beta-galactosidase B (1008 aa).

Residues 1 to 18 (MLLQSLFAWALAIGPCIA) form the signal peptide. N-linked (GlcNAc...) asparagine glycans are attached at residues Asn20 and Asn23. Tyr87 is a substrate binding site. Asn108 is a glycosylation site (N-linked (GlcNAc...) asparagine). Substrate-binding residues include Asn132, Ala133, Glu134, and Asn192. Glu193 (proton donor) is an active-site residue. N-linked (GlcNAc...) asparagine glycosylation is present at Asn208. Tyr262 provides a ligand contact to substrate. Cysteines 268 and 321 form a disulfide. Asn269 is a glycosylation site (N-linked (GlcNAc...) asparagine). The active-site Nucleophile is Glu305. Substrate is bound at residue Tyr370. Asn453, Asn594, Asn624, Asn681, Asn703, Asn782, Asn788, Asn816, Asn826, and Asn879 each carry an N-linked (GlcNAc...) asparagine glycan.

This sequence belongs to the glycosyl hydrolase 35 family.

The protein resides in the secreted. The catalysed reaction is Hydrolysis of terminal non-reducing beta-D-galactose residues in beta-D-galactosides.. Its function is as follows. Cleaves beta-linked terminal galactosyl residues from gangliosides, glycoproteins, and glycosaminoglycans. This is Probable beta-galactosidase B (lacB) from Sclerotinia sclerotiorum (strain ATCC 18683 / 1980 / Ss-1) (White mold).